We begin with the raw amino-acid sequence, 415 residues long: T-cell-specific guanine nucleotide triphosphate-binding protein 1 (415 aa).

One can recognise an IRG-type G domain in the interval 55-237 (APLHIAVTGE…PKLETKLLQD (183 aa)). GDP-binding residues include G66, G68, K69, and S70. (Microbial infection) Phosphothreonine; by ROP17 is present on T89. GDP-binding residues include G90, K171, D173, and N219.

This sequence belongs to the TRAFAC class dynamin-like GTPase superfamily. IRG family. As to quaternary structure, monomer, homodimer or homotetramer in the presence of GTP. Forms higher order homooligomers in GTP-dependent manner. In terms of assembly, (Microbial infection) Interacts with Toxoplasma gondii ROP18. In terms of processing, (Microbial infection) Phosphorylated by Toxoplasma gondii ROP17; the phosphorylation leads to disassembly of IRGB6 (TGTP1/TGTP2) polymers into monomers and dimers. Phosphorylated by Toxoplasma gondii ROP18. Expressed in thymus and lymph nodes, predominantly T-cells. Not expressed by immature CD4(+) CD8(+) thymocytes (at protein level). Expressed in IFNG-stimulated macrophages. Expressed at low levels in unstimulated astrocytes. Due to sequence similarity with Tgtp2, it is impossible to assign unambiguously experimental data published in the literature to Tgtp1 or Tgtp2 gene.

It localises to the cytoplasm. It is found in the endoplasmic reticulum. The protein resides in the golgi apparatus. The protein localises to the parasitophorous vacuole membrane. The catalysed reaction is GTP + H2O = GDP + phosphate + H(+). Involved in innate cell-autonomous resistance to intracellular pathogens, such as Toxoplasma gondii. During avirulent type II T.gondii infection, recruited to the parasitophorous vacuole (PV) membrane, leading to PV vesiculation and rupture, and subsequent digestion of the parasite within the cytosol. Not recruited to virulent type I T.gondii PV membrane. May confer an antiviral state for vesicular stomatitis virus. In Mus musculus (Mouse), this protein is T-cell-specific guanine nucleotide triphosphate-binding protein 1 (Tgtp1).